We begin with the raw amino-acid sequence, 136 residues long: Small ribosomal subunit protein uS9 (136 aa).

A disordered region spans residues 97-136 (SPDNRKPLKTEGHLSRDPRAKERRKYGLKKARKAPQFSKR). The span at 98–116 (PDNRKPLKTEGHLSRDPRA) shows a compositional bias: basic and acidic residues. Basic residues predominate over residues 117 to 136 (KERRKYGLKKARKAPQFSKR).

Belongs to the universal ribosomal protein uS9 family.

The chain is Small ribosomal subunit protein uS9 from Prochlorococcus marinus (strain MIT 9215).